The primary structure comprises 250 residues: Bis(5'-nucleosyl)-tetraphosphatase PrpE [asymmetrical] (250 aa).

This sequence belongs to the PrpE family. The cofactor is Ni(2+).

It catalyses the reaction P(1),P(4)-bis(5'-guanosyl) tetraphosphate + H2O = GMP + GTP + 2 H(+). Its function is as follows. Asymmetrically hydrolyzes Ap4p to yield AMP and ATP. This chain is Bis(5'-nucleosyl)-tetraphosphatase PrpE [asymmetrical], found in Oceanobacillus iheyensis (strain DSM 14371 / CIP 107618 / JCM 11309 / KCTC 3954 / HTE831).